Here is a 305-residue protein sequence, read N- to C-terminus: uncharacterized protein (305 aa).

Residues 8-28 form a helical membrane-spanning segment; that stretch reads IGALVTAVIAIGIVFSHMILF.

The protein localises to the membrane. This is an uncharacterized protein from Bacillus subtilis (strain 168).